Consider the following 183-residue polypeptide: dCTP deaminase (183 aa).

Residue 106 to 111 participates in dCTP binding; it reads KSTYAR. The Proton donor/acceptor role is filled by E132. Positions 151, 165, and 175 each coordinate dCTP.

It belongs to the dCTP deaminase family. As to quaternary structure, homotrimer.

The catalysed reaction is dCTP + H2O + H(+) = dUTP + NH4(+). Its pathway is pyrimidine metabolism; dUMP biosynthesis; dUMP from dCTP (dUTP route): step 1/2. Its function is as follows. Catalyzes the deamination of dCTP to dUTP. This Gluconobacter oxydans (strain 621H) (Gluconobacter suboxydans) protein is dCTP deaminase.